The chain runs to 429 residues: MKKVLSIILGGGAGTRLYPLTKLRAKPAVPVAGKYRLIDIPVSNCINSEIFKIYVLTQFNSASLNRHIARTYNFTGFNEGFVEVLAAQQTPENPNWFQGTADAVRQYLWLMEEWDVEEYLILSGDHLYRMDYRQFIQRHRDTGADITLSVIPIDERRASDFGLMKIDDSGRIIDFSEKPKGEALTQMQVDTSVLGLTKEQAQKQPYIASMGIYVFKKEVLFKLLRESVERTDFGKEIIPDASKDYNVQAYLFDDYWEDIGTIEAFYHANLALTQQPQPPFSFYDEHAPIYTRARYLPPTKLLDCQITESIIGEGCILKNCRIQHSVLGVRSRIESGCVIEESLLMGADFYQASVERQCSLIENDIPVGIGTDTIIRGAIIDKNARIGHDVKIVNKDNVQEAERENQGFYIRSGIVVVLKNAVIPDGTII.

Residues Gly-162, 177–178 (EK), and Ser-209 each bind alpha-D-glucose 1-phosphate.

Belongs to the bacterial/plant glucose-1-phosphate adenylyltransferase family. Homotetramer.

The catalysed reaction is alpha-D-glucose 1-phosphate + ATP + H(+) = ADP-alpha-D-glucose + diphosphate. Its pathway is glycan biosynthesis; glycogen biosynthesis. Its function is as follows. Involved in the biosynthesis of ADP-glucose, a building block required for the elongation reactions to produce glycogen. Catalyzes the reaction between ATP and alpha-D-glucose 1-phosphate (G1P) to produce pyrophosphate and ADP-Glc. This is Glucose-1-phosphate adenylyltransferase from Nostoc punctiforme (strain ATCC 29133 / PCC 73102).